The chain runs to 380 residues: Acyl-lipid (9+3)-(E)-desaturase (380 aa).

Residues 1-25 (MGAGGCISVSETKPNQKNSLERAPY) are disordered. The span at 9-18 (VSETKPNQKN) shows a compositional bias: polar residues. 2 helical membrane passes run 52 to 72 (LSYVASDLTVAFLLYHATTYF) and 81 to 101 (ALAWLAYWVAQGCVLTGVWVI). A Histidine box-1 motif is present at residues 103-107 (HECGH). Positions 139 to 143 (HRRHH) match the Histidine box-2 motif. A run of 3 helical transmembrane segments spans residues 177 to 197 (IGVLFITLTLGWPLYLTFNVS), 223 to 243 (IYLSDIGIVITSLVLLRAAMV), and 247 to 267 (VWLICVYGVPLMITNGFLVLV). A Histidine box-3 motif is present at residues 313–317 (HIVHH).

It belongs to the fatty acid desaturase type 1 family.

It localises to the membrane. It catalyses the reaction a (9Z)-octadecenoyl-containing glycerolipid + 2 Fe(II)-[cytochrome b5] + O2 + 2 H(+) = a (9Z,12E)-octadecadienoyl-containing glycerolipid + 2 Fe(III)-[cytochrome b5] + 2 H2O. The enzyme catalyses a (9Z)-hexadecenoyl-containing glycerolipid + 2 Fe(II)-[cytochrome b5] + O2 + 2 H(+) = a (9Z,12E)-hexadecadienoyl-containing glycerolipid + 2 Fe(III)-[cytochrome b5] + 2 H2O. In terms of biological role, involved in the biosynthesis of dimorphecolic acid (9-OH-18:2(10E,12E)). Converts oleic acid (18:1(9Z)) into 18:2(9Z,12E) and probably palmitoleic acid (16:1(9Z)) into 16:2(9Z,12E). Very limited ability to catalyze (Z)-delta(12) desaturation. This is Acyl-lipid (9+3)-(E)-desaturase from Dimorphotheca sinuata (African daisy).